Reading from the N-terminus, the 496-residue chain is Membrane-bound lytic murein transglycosylase F (496 aa).

The N-terminal stretch at 1 to 31 is a signal peptide; it reads MPIFSTRVLTYLRCIFRLFIGLTLLLTLVGC. The tract at residues 32–271 is non-LT domain; it reads DFYTPSSQLE…KLDEKYFGHV (240 aa). The interval 273-496 is LT domain; sequence NFDFVDTRTF…AEVVKQITLR (224 aa). Glu316 is an active-site residue. A disordered region spans residues 464-486; it reads HRREELDDDDSSEPPSAERPTVI.

The protein in the N-terminal section; belongs to the bacterial solute-binding protein 3 family. In the C-terminal section; belongs to the transglycosylase Slt family.

The protein resides in the cell outer membrane. It catalyses the reaction Exolytic cleavage of the (1-&gt;4)-beta-glycosidic linkage between N-acetylmuramic acid (MurNAc) and N-acetylglucosamine (GlcNAc) residues in peptidoglycan, from either the reducing or the non-reducing ends of the peptidoglycan chains, with concomitant formation of a 1,6-anhydrobond in the MurNAc residue.. In terms of biological role, murein-degrading enzyme that degrades murein glycan strands and insoluble, high-molecular weight murein sacculi, with the concomitant formation of a 1,6-anhydromuramoyl product. Lytic transglycosylases (LTs) play an integral role in the metabolism of the peptidoglycan (PG) sacculus. Their lytic action creates space within the PG sacculus to allow for its expansion as well as for the insertion of various structures such as secretion systems and flagella. The sequence is that of Membrane-bound lytic murein transglycosylase F from Aeromonas hydrophila subsp. hydrophila (strain ATCC 7966 / DSM 30187 / BCRC 13018 / CCUG 14551 / JCM 1027 / KCTC 2358 / NCIMB 9240 / NCTC 8049).